The primary structure comprises 158 residues: Snaclec jerdonuxin subunit alpha (158 aa).

The N-terminal stretch at 1–23 is a signal peptide; sequence MGRFTFVSFGLLVVFLSLSGTGA. Disulfide bonds link Cys27-Cys38, Cys55-Cys152, and Cys127-Cys144. Positions 34–153 constitute a C-type lectin domain; that stretch reads YDRYCYQAFS…CGTENPFVCK (120 aa).

The protein belongs to the snaclec family. As to quaternary structure, tetramer of 4 heterodimers of alpha and beta subunits; disulfide-linked. As to expression, expressed by the venom gland.

The protein localises to the secreted. In terms of biological role, snaclec that strongly induces platelet aggregation, in a dose-dependent manner. The protein is Snaclec jerdonuxin subunit alpha of Protobothrops jerdonii (Jerdon's pitviper).